We begin with the raw amino-acid sequence, 337 residues long: Pyruvate dehydrogenase E1 component subunit beta (337 aa).

Glutamate 73 provides a ligand contact to thiamine diphosphate.

Heterodimer of an alpha and a beta chain. Thiamine diphosphate serves as cofactor.

It carries out the reaction N(6)-[(R)-lipoyl]-L-lysyl-[protein] + pyruvate + H(+) = N(6)-[(R)-S(8)-acetyldihydrolipoyl]-L-lysyl-[protein] + CO2. In terms of biological role, the pyruvate dehydrogenase complex catalyzes the overall conversion of pyruvate to acetyl-CoA and CO(2). It contains multiple copies of three enzymatic components: pyruvate dehydrogenase (E1), dihydrolipoamide acetyltransferase (E2) and lipoamide dehydrogenase (E3). The protein is Pyruvate dehydrogenase E1 component subunit beta (pdhB) of Leifsonia xyli subsp. xyli (strain CTCB07).